The sequence spans 336 residues: Nuclear envelope-associated protein 1 (336 aa).

Positions C125–K261 form a coiled coil. The Bipartite nuclear localization signal signature appears at K240 to K261. The chain crosses the membrane as a helical span at residues F313–L330.

Forms heteromers with NEAP2 and NEAP3. Interacts with SUN1; SUN2 and bZIP18.

Its subcellular location is the nucleus inner membrane. It is found in the nucleus. The protein resides in the nucleoplasm. The sequence is that of Nuclear envelope-associated protein 1 from Arabidopsis thaliana (Mouse-ear cress).